Consider the following 159-residue polypeptide: RNA pyrophosphohydrolase (159 aa).

The region spanning G6–K149 is the Nudix hydrolase domain. The Nudix box signature appears at G38–G59.

The protein belongs to the Nudix hydrolase family. RppH subfamily. It depends on a divalent metal cation as a cofactor.

Its function is as follows. Accelerates the degradation of transcripts by removing pyrophosphate from the 5'-end of triphosphorylated RNA, leading to a more labile monophosphorylated state that can stimulate subsequent ribonuclease cleavage. This is RNA pyrophosphohydrolase from Stutzerimonas stutzeri (strain A1501) (Pseudomonas stutzeri).